The following is a 269-amino-acid chain: Phosphate import ATP-binding protein PstB 1 (269 aa).

Residues 25–264 form the ABC transporter domain; sequence LSTEDLHVFY…PQVDLTNDYI (240 aa). 57-64 is a binding site for ATP; sequence GPSGSGKS.

The protein belongs to the ABC transporter superfamily. Phosphate importer (TC 3.A.1.7) family. The complex is composed of two ATP-binding proteins (PstB), two transmembrane proteins (PstC and PstA) and a solute-binding protein (PstS).

The protein localises to the cell membrane. It carries out the reaction phosphate(out) + ATP + H2O = ADP + 2 phosphate(in) + H(+). Its function is as follows. Part of the ABC transporter complex PstSACB involved in phosphate import. Responsible for energy coupling to the transport system. The protein is Phosphate import ATP-binding protein PstB 1 of Lactiplantibacillus plantarum (strain ATCC BAA-793 / NCIMB 8826 / WCFS1) (Lactobacillus plantarum).